The primary structure comprises 132 residues: Small ribosomal subunit protein uS8 (132 aa).

It belongs to the universal ribosomal protein uS8 family. In terms of assembly, part of the 30S ribosomal subunit. Contacts proteins S5 and S12.

Functionally, one of the primary rRNA binding proteins, it binds directly to 16S rRNA central domain where it helps coordinate assembly of the platform of the 30S subunit. This Tropheryma whipplei (strain Twist) (Whipple's bacillus) protein is Small ribosomal subunit protein uS8.